Consider the following 590-residue polypeptide: MIPASMEEAHQLESRSDDLSQRRSYWRWRKQDFFPEFSFQSFSTYKSALSATCPRLADRLLSRSSDAYELDAARRESENPMRRCLTWWDLLWLSFGSVVGSGVFVITGQEARVGAGPAVVLSYAISGVSALLSVLCYAEFGVEIPVAGGSFSYLRVELGDFIAFIAAGNILLEAMVGAAGLGRSWSSYLASLVKNDSDYFRIKVDSFAKGFDLLDPVAVAVLLVANGIAMTGTKRTSWLNLITSMVTVCIIVFIVVVGFTHSKTSNLVPFFPYGAKGVVQSAAVVYWSYTGFDMVANMAEETEKPSRDIPIGLVGSMSMITVVYCLMALALTMMVKYTEIDANAAYSVAFAQIGMKWAKYLVGICALKGMTTSLLVGSLGQARYTTQIARSHMIPPWFALVHPKTGTPIYATLLVTILSSIISFFTSLEVLSSVFSFATLFIFMLVAVALLVRRYYVKDVTPEAGLLKFLGFLFLIIASSIGVSALWNSGVKGWIAYTVTGVIWFIGTLGLALLPKYRVPKVWGVPLVPWLPSFSIAMNLFLIGSLGYVAFLRFIICTMVMLLYYLFVGLHATYDVAHQPLEEAKFEGER.

The Cytoplasmic segment spans residues 1–85 (MIPASMEEAH…ESENPMRRCL (85 aa)). A helical transmembrane segment spans residues 86-106 (TWWDLLWLSFGSVVGSGVFVI). Residues 107-114 (TGQEARVG) lie on the Vacuolar side of the membrane. A helical membrane pass occupies residues 115–135 (AGPAVVLSYAISGVSALLSVL). The Cytoplasmic segment spans residues 136–160 (CYAEFGVEIPVAGGSFSYLRVELGD). Residues 161–181 (FIAFIAAGNILLEAMVGAAGL) traverse the membrane as a helical segment. Over 182 to 209 (GRSWSSYLASLVKNDSDYFRIKVDSFAK) the chain is Vacuolar. A glycan (N-linked (GlcNAc...) asparagine) is linked at Asn195. Residues 210–230 (GFDLLDPVAVAVLLVANGIAM) form a helical membrane-spanning segment. Over 231-238 (TGTKRTSW) the chain is Cytoplasmic. A helical transmembrane segment spans residues 239–259 (LNLITSMVTVCIIVFIVVVGF). Over 260–266 (THSKTSN) the chain is Vacuolar. The helical transmembrane segment at 267–287 (LVPFFPYGAKGVVQSAAVVYW) threads the bilayer. Topologically, residues 288-310 (SYTGFDMVANMAEETEKPSRDIP) are cytoplasmic. The chain crosses the membrane as a helical span at residues 311–331 (IGLVGSMSMITVVYCLMALAL). The Vacuolar portion of the chain corresponds to 332–359 (TMMVKYTEIDANAAYSVAFAQIGMKWAK). A helical transmembrane segment spans residues 360–380 (YLVGICALKGMTTSLLVGSLG). At 381–407 (QARYTTQIARSHMIPPWFALVHPKTGT) the chain is on the cytoplasmic side. Residues 408 to 428 (PIYATLLVTILSSIISFFTSL) form a helical membrane-spanning segment. Position 429 (Glu429) is a topological domain, vacuolar. A helical membrane pass occupies residues 430-450 (VLSSVFSFATLFIFMLVAVAL). The Cytoplasmic segment spans residues 451–465 (LVRRYYVKDVTPEAG). The helical transmembrane segment at 466–486 (LLKFLGFLFLIIASSIGVSAL) threads the bilayer. The Vacuolar portion of the chain corresponds to 487–493 (WNSGVKG). A helical transmembrane segment spans residues 494-514 (WIAYTVTGVIWFIGTLGLALL). The Cytoplasmic segment spans residues 515-522 (PKYRVPKV). Residues 523-543 (WGVPLVPWLPSFSIAMNLFLI) traverse the membrane as a helical segment. Residues 544–553 (GSLGYVAFLR) are Vacuolar-facing. A helical transmembrane segment spans residues 554–574 (FIICTMVMLLYYLFVGLHATY). At 575-590 (DVAHQPLEEAKFEGER) the chain is on the cytoplasmic side.

It belongs to the amino acid-polyamine-organocation (APC) superfamily. Cationic amino acid transporter (CAT) (TC 2.A.3.3) family. Expressed in roots, stems, flowers and leaves. Mostly present in young and rapidly dividing tissues such as the shoot and root apical meristem, and in young leaves and petioles during seedling development.

It is found in the cell membrane. In terms of biological role, permease involved in the transport of the cationic neutral or acidic amino acids. In Arabidopsis thaliana (Mouse-ear cress), this protein is Cationic amino acid transporter 8, vacuolar (CAT8).